Consider the following 522-residue polypeptide: Lysine--tRNA ligase (522 aa).

The short motif at 44–52 (PSGLPHIGT) is the 'HIGH' region element. A 'KMSKS' region motif is present at residues 290–294 (KISKS). Residue K293 participates in ATP binding.

The protein belongs to the class-I aminoacyl-tRNA synthetase family.

The protein resides in the cytoplasm. It catalyses the reaction tRNA(Lys) + L-lysine + ATP = L-lysyl-tRNA(Lys) + AMP + diphosphate. The polypeptide is Lysine--tRNA ligase (Rickettsia africae (strain ESF-5)).